We begin with the raw amino-acid sequence, 95 residues long: Protein YY1 (95 aa).

A signal peptide spans 1–26 (MAVTRTALLVVLVAGAMTMTMRGAEA). 4 disulfides stabilise this stretch: Cys31–Cys72, Cys41–Cys61, Cys62–Cys87, and Cys74–Cys94.

This sequence belongs to the A9/FIL1 family. As to expression, anther.

The protein localises to the secreted. This is Protein YY1 from Oryza sativa subsp. japonica (Rice).